Here is a 342-residue protein sequence, read N- to C-terminus: 6-hydroxytryprostatin B O-methyltransferase (342 aa).

Position 201 (Asp201) interacts with S-adenosyl-L-methionine. His244 (proton acceptor) is an active-site residue.

The protein belongs to the class I-like SAM-binding methyltransferase superfamily. Cation-independent O-methyltransferase family. Homodimer.

It catalyses the reaction 6-hydroxytryprostatin B + S-adenosyl-L-methionine = tryprostatin A + S-adenosyl-L-homocysteine + H(+). The protein operates within alkaloid biosynthesis. In terms of biological role, 6-hydroxytryprostatin B O-methyltransferase; part of the gene cluster that mediates the biosynthesis of fumitremorgins, indole alkaloids that carry not only intriguing chemical structures, but also interesting biological and pharmacological activities. The biosynthesis of fumitremorgin-type alkaloids begins by condensation of the two amino acids L-tryptophan and L-proline to brevianamide F, catalyzed by the non-ribosomal peptide synthetase ftmA. Brevianamide F is then prenylated by the prenyltransferase ftmPT1/ftmB in the presence of dimethylallyl diphosphate, resulting in the formation of tryprostatin B. The three cytochrome P450 monooxygenases, ftmP450-1/ftmC, ftmP450-2/ftmE and ftmP450-3/FtmG, are responsible for the conversion of tryprostatin B to 6-hydroxytryprostatin B, tryprostatin A to fumitremorgin C and fumitremorgin C to 12,13-dihydroxyfumitremorgin C, respectively. The putative methyltransferase ftmMT/ftmD is expected for the conversion of 6-hydroxytryprostatin B to tryprostatin A. FtmPT2/FtmH catalyzes the prenylation of 12,13-dihydroxyfumitre-morgin C in the presence of dimethylallyl diphosphate, resulting in the formation of fumitremorgin B. Fumitremorgin B is further converted to verruculogen by ftmOx1/ftmF via the insertion of an endoperoxide bond between the two prenyl moieties. In some fungal species, verruculogen is further converted to fumitremorgin A, but the enzymes involved in this step have not been identified yet. The chain is 6-hydroxytryprostatin B O-methyltransferase from Aspergillus fumigatus (Neosartorya fumigata).